Reading from the N-terminus, the 193-residue chain is dITP/XTP pyrophosphatase (193 aa).

7–12 (SENENK) is a binding site for substrate. Asp65 (proton acceptor) is an active-site residue. Asp65 serves as a coordination point for Mg(2+). Residues Ser66, 144 to 147 (FGYD), Lys167, and 172 to 173 (HR) contribute to the substrate site.

Belongs to the HAM1 NTPase family. Homodimer. Requires Mg(2+) as cofactor.

The enzyme catalyses XTP + H2O = XMP + diphosphate + H(+). The catalysed reaction is dITP + H2O = dIMP + diphosphate + H(+). It catalyses the reaction ITP + H2O = IMP + diphosphate + H(+). Pyrophosphatase that catalyzes the hydrolysis of nucleoside triphosphates to their monophosphate derivatives, with a high preference for the non-canonical purine nucleotides XTP (xanthosine triphosphate), dITP (deoxyinosine triphosphate) and ITP. Seems to function as a house-cleaning enzyme that removes non-canonical purine nucleotides from the nucleotide pool, thus preventing their incorporation into DNA/RNA and avoiding chromosomal lesions. The polypeptide is dITP/XTP pyrophosphatase (Tropheryma whipplei (strain TW08/27) (Whipple's bacillus)).